Consider the following 137-residue polypeptide: DNA-directed RNA polymerase I subunit RPA14 (137 aa).

A disordered region spans residues 100–137 (PPAQDFSAAPIQVSTTEKKETSIGVSATGGKKTTFADE). Position 121 is a phosphoserine (Ser121).

As to quaternary structure, component of the RNA polymerase I (Pol I) complex consisting of 14 subunits: RPA135, RPA190, RPC40, RPA14, RPB5, RPO26, RPA43, RPB8, RPA12, RPB10, RPC19, RPC10, RPA49 and RPA34. The complex is composed of a horseshoe-shaped core containing ten subunits (RPA135, RPA190, RPB5, RPO26, RPB8, RPB10, RPC10, RPA12, RPC19 and RPC40) where RPA135 and RPA190 form the DNA-binding cleft. Outside of the core, RPA14 and RPA43 form the stalk that mediates interactions with transcription initiation factors and newly synthesized RNA. In terms of processing, the N-terminus is blocked.

The protein resides in the nucleus. The protein localises to the nucleolus. DNA-dependent RNA polymerases catalyze the transcription of DNA into RNA using the four ribonucleoside triphosphates as substrates. Component of RNA polymerase I (Pol I) which synthesizes ribosomal RNA precursors. RPA14 seems to play a role in the stability of subunits RPO26 and RPA43. In vitro, the RPA14-RPA43 subcomplex binds single-stranded RNA. This is DNA-directed RNA polymerase I subunit RPA14 (RPA14) from Saccharomyces cerevisiae (strain ATCC 204508 / S288c) (Baker's yeast).